Consider the following 266-residue polypeptide: CD82 antigen (266 aa).

At 1-11 (MGAGCVKVTKY) the chain is on the cytoplasmic side. The S-palmitoyl cysteine moiety is linked to residue C5. Residues 12 to 32 (FLFLFNLLFFILGAVILGFGV) form a helical membrane-spanning segment. Topologically, residues 33–53 (WILADKSSFISVLQTSSSSLQ) are extracellular. Residues 54-72 (VGAYVFIGVGAITMLMGFL) traverse the membrane as a helical segment. At 73–83 (GCIGAVNEVRC) the chain is on the cytoplasmic side. A lipid anchor (S-palmitoyl cysteine) is attached at C74. The chain crosses the membrane as a helical span at residues 84-110 (LLGLYFVFLLLILIAQVTVEVLFYFNA). Residues 111-227 (NKLKQEMGNT…KAQAWLQENF (117 aa)) lie on the Extracellular side of the membrane. 5 N-linked (GlcNAc...) asparagine glycosylation sites follow: N127, N131, N157, N166, and N197. The helical transmembrane segment at 228 to 249 (GILLGVCAGVAVIELLGLFLSI) threads the bilayer. Topologically, residues 250–266 (CLCRYIHSEDYSKVPKY) are cytoplasmic.

It belongs to the tetraspanin (TM4SF) family. As to quaternary structure, forms homooligomers. Interacts directly with IGSF8. Interacts with EGFR. Interacts with VEGFA and PDGFA. Interacts with ITGA4. Interacts with ITGA6; this interaction reduces ITGA6 cell surface expression. Interacts with ITGB1. Interacts with TLR4; this interaction inhibits TLR4-mediated signaling pathway. Interacts with TLR9. Interacts with PLAUR. Post-translationally, palmitoylated. Palmitoylation contributes to oligomerization and surface expression.

It localises to the cell membrane. Its function is as follows. Structural component of specialized membrane microdomains known as tetraspanin-enriched microdomains (TERMs), which act as platforms for receptor clustering and signaling. Participates thereby in diverse biological functions such as cell signal transduction, adhesion, migration and protein trafficking. Acts as a attenuator of EGF signaling, facilitating ligand-induced endocytosis of the receptor and its subsequent desensitization. Mechanistically, modulates ligand-induced ubiquitination and trafficking of EGFR via E3 ligase CBL phosphorylation by PKC. Increases cell-matrix adhesion by regulating the membrane organization of integrin alpha4/ITA4. Modulates adhesion and suppresses cell migration through other integrins such as the alpha6/ITGA6 and beta1/ITGB1. Decreases cell-associated plasminogen activation by interfering with the interaction between urokinase-type plasminogen activator/PLAU and its receptor PLAUR. Associates with CD4 or CD8 and delivers costimulatory signals for the TCR/CD3 pathway. Plays a role in the restrains phagocyte migration but supports macrophage activation. Plays a role in TLR9 trafficking to acidified CpG-containing compartments by controlling interaction between TLR9 and VAMP3 and subsequent myddosome assembly. Inhibits LPS-induced inflammatory response by preventing binding of LPS to TLR4 on the cell surface. Plays a role in the activation of macrophages into anti-inflammatory phenotypes. Independently of Toll-like receptor (TLR) signaling, is recruited to pathogen-containing phagosomes prior to fusion with lysosomes and participates in antigen presentation. Also acts to control angiogenesis and switch angiogenic milieu to quiescent state by binding and sequestering VEGFA and PDGFA to inhibit the signaling they trigger via their respective cell surface receptor. The protein is CD82 antigen (Cd82) of Rattus norvegicus (Rat).